The sequence spans 633 residues: Probable methyltransferase PMT15 (633 aa).

Over 1 to 24 the chain is Cytoplasmic; the sequence is MGNYRWPSKLSKLSLRAKQTNLYR. The helical; Signal-anchor for type II membrane protein transmembrane segment at 25–45 threads the bilayer; sequence VILIAILCVTFYFVGVWQHSG. Residues 46-633 lie on the Lumenal side of the membrane; that stretch reads RGISRSSISN…APAPDQSSDP (588 aa). 2 N-linked (GlcNAc...) asparagine glycosylation sites follow: N113 and N298.

Belongs to the methyltransferase superfamily.

It is found in the golgi apparatus membrane. In Arabidopsis thaliana (Mouse-ear cress), this protein is Probable methyltransferase PMT15.